Reading from the N-terminus, the 292-residue chain is Ribosome-inactivating protein saporin-2 (292 aa).

Residues 1-24 form the signal peptide; sequence MKIYVVATIAWILLQFSAWTTTDA. Residue Glu200 is part of the active site.

Belongs to the ribosome-inactivating protein family. Type 1 RIP subfamily.

The enzyme catalyses Endohydrolysis of the N-glycosidic bond at one specific adenosine on the 28S rRNA.. Ribosome-inactivating protein of type 1, inhibits protein synthesis in animal cells. Useful as immunotoxin for pharmacological applications. The sequence is that of Ribosome-inactivating protein saporin-2 (SAP2) from Saponaria officinalis (Common soapwort).